The following is a 641-amino-acid chain: Fibrinogen alpha-2 chain (641 aa).

A signal peptide spans 1 to 23 (MTLRGVSMVLTWCLLVSKAWSSG). A coiled-coil region spans residues 107-226 (SVSDVSNQVV…IVHESFSVER (120 aa)). The interval 228–327 (DARSLHPYSG…QKTEELSFKK (100 aa)) is disordered. Residue asparagine 271 is glycosylated (N-linked (GlcNAc...) asparagine). Over residues 279–289 (VDERSKVEKDV) the composition is skewed to basic and acidic residues. A compositionally biased stretch (low complexity) spans 293–317 (STSSVSSSSSSSSSSSSTSSTISST). In terms of domain architecture, Fibrinogen C-terminal spans 395–636 (RTNLSEYIDC…RTAVRFRRVQ (242 aa)). N-linked (GlcNAc...) asparagine glycosylation is present at asparagine 397. An intrachain disulfide couples cysteine 404 to cysteine 435. Asparagine 458 carries an N-linked (GlcNAc...) asparagine glycan. Cysteine 571 and cysteine 584 are oxidised to a cystine.

As to quaternary structure, heterohexamer; disulfide linked. Contains 2 sets of 3 non-identical chains (alpha, beta and gamma). The 2 heterotrimers are in head to head conformation with the N-termini in a small central domain. In terms of processing, conversion of fibrinogen to fibrin is triggered by thrombin, which cleaves fibrinopeptides A and B from alpha and beta chains, and thus exposes the N-terminal polymerization sites responsible for the formation of the soft clot. The soft clot is converted into the hard clot by factor XIIIA which catalyzes the epsilon-(gamma-glutamyl)lysine cross-linking between gamma chains (stronger) and between alpha chains (weaker) of different monomers. Forms F13A-mediated cross-links between a glutamine and the epsilon-amino group of a lysine residue, forming fibronectin-fibrinogen heteropolymers.

Its subcellular location is the secreted. In terms of biological role, fibrinogen has a double function: yielding monomers that polymerize into fibrin and acting as a cofactor in platelet aggregation. This is Fibrinogen alpha-2 chain from Petromyzon marinus (Sea lamprey).